Reading from the N-terminus, the 164-residue chain is 2S seed storage protein 3 (164 aa).

The first 21 residues, 1 to 21, serve as a signal peptide directing secretion; that stretch reads MANKLFLVCATLALCFLLTNA. Propeptides lie at residues 22–37 and 73–81; these read SIYRTVVEFEEDDASN and GPSLDDEFD.

The protein belongs to the 2S seed storage albumins family. In terms of assembly, the mature protein consists of a small and a large chain linked by disulfide bonds. Interacts with AHK2.

This is a 2S seed storage protein. In Arabidopsis thaliana (Mouse-ear cress), this protein is 2S seed storage protein 3 (AT2S3).